The following is a 645-amino-acid chain: Threonine--tRNA ligase (645 aa).

Positions 1 to 63 (MEQINIQFPD…ETDGSIEIVT (63 aa)) constitute a TGS domain. The tract at residues 242 to 540 (DHRKIGKELE…LTEETKGAFP (299 aa)) is catalytic. Residues Cys336, His387, and His517 each coordinate Zn(2+).

This sequence belongs to the class-II aminoacyl-tRNA synthetase family. As to quaternary structure, homodimer. The cofactor is Zn(2+).

It localises to the cytoplasm. It catalyses the reaction tRNA(Thr) + L-threonine + ATP = L-threonyl-tRNA(Thr) + AMP + diphosphate + H(+). Its function is as follows. Catalyzes the attachment of threonine to tRNA(Thr) in a two-step reaction: L-threonine is first activated by ATP to form Thr-AMP and then transferred to the acceptor end of tRNA(Thr). Also edits incorrectly charged L-seryl-tRNA(Thr). In Staphylococcus aureus (strain JH1), this protein is Threonine--tRNA ligase.